We begin with the raw amino-acid sequence, 122 residues long: Large ribosomal subunit protein uL14 (122 aa).

It belongs to the universal ribosomal protein uL14 family. Part of the 50S ribosomal subunit. Forms a cluster with proteins L3 and L19. In the 70S ribosome, L14 and L19 interact and together make contacts with the 16S rRNA in bridges B5 and B8.

Binds to 23S rRNA. Forms part of two intersubunit bridges in the 70S ribosome. The protein is Large ribosomal subunit protein uL14 of Shewanella sediminis (strain HAW-EB3).